The following is a 225-amino-acid chain: Probable polyketide biosynthesis zinc-dependent hydrolase BaeB (225 aa).

The Zn(2+) site is built by His62, His64, Asp66, His67, His123, Asp140, and His181.

Belongs to the metallo-beta-lactamase superfamily. Zn(2+) serves as cofactor.

The protein localises to the cytoplasm. It participates in antibiotic biosynthesis; bacillaene biosynthesis. Functionally, probably involved in some intermediate steps for the synthesis of the antibiotic polyketide bacillaene which is involved in secondary metabolism. The protein is Probable polyketide biosynthesis zinc-dependent hydrolase BaeB (baeB) of Bacillus velezensis (strain DSM 23117 / BGSC 10A6 / LMG 26770 / FZB42) (Bacillus amyloliquefaciens subsp. plantarum).